Here is a 531-residue protein sequence, read N- to C-terminus: Fatty acid--[acyl-carrier-protein] ligase MmaC (531 aa).

T169 lines the Mg(2+) pocket. ATP is bound by residues I218, V308, and S312. Residue E313 coordinates Mg(2+). ATP is bound at residue D403.

It belongs to the ATP-dependent AMP-binding enzyme family. Mg(2+) serves as cofactor.

The enzyme catalyses a (2E)-enoyl fatty acid + holo-[ACP] + ATP = a (2E)-enoyl-[ACP] + AMP + diphosphate. The catalysed reaction is a (2E)-enoyl fatty acid + ATP + H(+) = a (2E)-2-fatty-enoyl-AMP + diphosphate. It catalyses the reaction a (2E)-2-fatty-enoyl-AMP + holo-[ACP] = a (2E)-enoyl-[ACP] + AMP + H(+). It carries out the reaction (2E)-decenoate + holo-[ACP] + ATP = (2E)-decenoyl-[ACP] + AMP + diphosphate. The enzyme catalyses a (3R)-3-isocyanyl-fatty acid + holo-[ACP] + ATP = a (3R)-3-isocyanyl-fatty acyl-[ACP] + AMP + diphosphate. The catalysed reaction is a (3R)-3-isocyanyl-fatty acid + ATP + H(+) = a (3R)-3-isocyanyl-fatty acyl-AMP + diphosphate. It catalyses the reaction a (3R)-3-isocyanyl-fatty acyl-AMP + holo-[ACP] = a (3R)-3-isocyanyl-fatty acyl-[ACP] + AMP + H(+). Functionally, acyl:acyl-carrier protein ligase involved in the biosynthesis of a unique class of isonitrile lipopeptides (INLPs) that seem to play a role in metal acquisition in M.marinum. Acts twice during the INLP pathway, catalyzing the activation of (2E)-2-decenoate as well as probably the corresponding (3R)-3-isocyanyl-fatty acid as acyl-adenylates (acyl-AMP), and then the acyl transfer to the dedicated acyl-carrier protein MmaB. This chain is Fatty acid--[acyl-carrier-protein] ligase MmaC, found in Mycobacterium marinum (strain ATCC BAA-535 / M).